Reading from the N-terminus, the 156-residue chain is Small ribosomal subunit protein uS7c (156 aa).

Belongs to the universal ribosomal protein uS7 family. Part of the 30S ribosomal subunit.

The protein localises to the plastid. It is found in the chloroplast. Functionally, one of the primary rRNA binding proteins, it binds directly to 16S rRNA where it nucleates assembly of the head domain of the 30S subunit. This is Small ribosomal subunit protein uS7c (rps7) from Zamia furfuracea (Cardboard cycad).